Reading from the N-terminus, the 191-residue chain is Protein Ves (191 aa).

Belongs to the Ves family.

The chain is Protein Ves from Escherichia coli O8 (strain IAI1).